Here is a 258-residue protein sequence, read N- to C-terminus: Trans-aconitate 2-methyltransferase (258 aa).

It belongs to the methyltransferase superfamily. Tam family.

Its subcellular location is the cytoplasm. The enzyme catalyses trans-aconitate + S-adenosyl-L-methionine = (E)-3-(methoxycarbonyl)pent-2-enedioate + S-adenosyl-L-homocysteine. Catalyzes the S-adenosylmethionine monomethyl esterification of trans-aconitate. The chain is Trans-aconitate 2-methyltransferase from Acidovorax ebreus (strain TPSY) (Diaphorobacter sp. (strain TPSY)).